The primary structure comprises 312 residues: Tyrosine recombinase XerC (312 aa).

The Core-binding (CB) domain occupies 1-103 (MIASIYSFLD…SIKSFAHYCV (103 aa)). The region spanning 124 to 306 (ELPSPMTYAQ…SVKLKKQTHQ (183 aa)) is the Tyr recombinase domain. Active-site residues include Arg164, Lys188, His258, Arg261, and His284. The active-site O-(3'-phospho-DNA)-tyrosine intermediate is the Tyr293.

The protein belongs to the 'phage' integrase family. XerC subfamily. As to quaternary structure, forms a cyclic heterotetrameric complex composed of two molecules of XerC and two molecules of XerD.

It is found in the cytoplasm. Its function is as follows. Site-specific tyrosine recombinase, which acts by catalyzing the cutting and rejoining of the recombining DNA molecules. The XerC-XerD complex is essential to convert dimers of the bacterial chromosome into monomers to permit their segregation at cell division. It also contributes to the segregational stability of plasmids. The sequence is that of Tyrosine recombinase XerC from Chlamydia pneumoniae (Chlamydophila pneumoniae).